A 273-amino-acid polypeptide reads, in one-letter code: Dermonecrotic toxin LhSicTox-alphaIA2biv (273 aa).

Residue H5 is part of the active site. E25 and D27 together coordinate Mg(2+). H41 (nucleophile) is an active-site residue. Intrachain disulfides connect C45–C51 and C47–C190. D85 is a binding site for Mg(2+).

It belongs to the arthropod phospholipase D family. Class II subfamily. Mg(2+) is required as a cofactor. Expressed by the venom gland.

It is found in the secreted. It carries out the reaction an N-(acyl)-sphingosylphosphocholine = an N-(acyl)-sphingosyl-1,3-cyclic phosphate + choline. The enzyme catalyses an N-(acyl)-sphingosylphosphoethanolamine = an N-(acyl)-sphingosyl-1,3-cyclic phosphate + ethanolamine. It catalyses the reaction a 1-acyl-sn-glycero-3-phosphocholine = a 1-acyl-sn-glycero-2,3-cyclic phosphate + choline. The catalysed reaction is a 1-acyl-sn-glycero-3-phosphoethanolamine = a 1-acyl-sn-glycero-2,3-cyclic phosphate + ethanolamine. Its function is as follows. Dermonecrotic toxins cleave the phosphodiester linkage between the phosphate and headgroup of certain phospholipids (sphingolipid and lysolipid substrates), forming an alcohol (often choline) and a cyclic phosphate. This toxin acts on sphingomyelin (SM). It may also act on ceramide phosphoethanolamine (CPE), lysophosphatidylcholine (LPC) and lysophosphatidylethanolamine (LPE), but not on lysophosphatidylserine (LPS), and lysophosphatidylglycerol (LPG). It acts by transphosphatidylation, releasing exclusively cyclic phosphate products as second products. Induces dermonecrosis, hemolysis, increased vascular permeability, edema, inflammatory response, and platelet aggregation. The protein is Dermonecrotic toxin LhSicTox-alphaIA2biv of Loxosceles hirsuta (Recluse spider).